Here is a 397-residue protein sequence, read N- to C-terminus: Tryptophan synthase beta chain (397 aa).

At lysine 86 the chain carries N6-(pyridoxal phosphate)lysine.

It belongs to the TrpB family. As to quaternary structure, tetramer of two alpha and two beta chains. Pyridoxal 5'-phosphate serves as cofactor.

The enzyme catalyses (1S,2R)-1-C-(indol-3-yl)glycerol 3-phosphate + L-serine = D-glyceraldehyde 3-phosphate + L-tryptophan + H2O. It participates in amino-acid biosynthesis; L-tryptophan biosynthesis; L-tryptophan from chorismate: step 5/5. Its function is as follows. The beta subunit is responsible for the synthesis of L-tryptophan from indole and L-serine. This chain is Tryptophan synthase beta chain, found in Tolumonas auensis (strain DSM 9187 / NBRC 110442 / TA 4).